A 1405-amino-acid polypeptide reads, in one-letter code: MKDPIDDQIPKRIKHLQFGINGPEEFVKDGTVEVSRRDLYTMTDRSPAEHGALDLHMGTSNKQINCATCGESMADCMGHFGYVKLALPVFHIGYFKATLTILQNICKDCSSVLLSDQEKRQFLKDLRRPGIDNLRRSQICKRINDHCKKMRRCSKCDAMQGVVKKAGPLKIIHERFRYVRKSQDDEENFRHSFDEALKTIPELKMHLSKAHDDLNPLKVLNLFKQITPVDCELLGMDPEHGRPENLLWRYVPAPPVCIRPSVAQEGATTEDDLTVKITEIIWTSSLIRAALSKGTPISNLMEQWEFMQLSIAMYINSEMPGLRPSDMPSKPIRGFCQRLKGKQGRFRGNLSGKRVDFSGRTVISPDPNLRIDQVAVPYRIAKILTFPERVTTQNKKHLQDCIRNGPDVHPGANYVIDRESGFKRFLRFGNRNRIADDLKIGDIVERHLHDNDVVLFNRQPSLHKLSIMAHLVKVRPWRTLRFNECVCGPYNADFDGDEMNLHVPQTEEAKTEALELMGIKNNLVSPRNGEPIIAATQDFITAAYLLSLKDTFLDRKSISNICCYMMDASTHIDLPPPAIIKPRCLWTGKQVFTVLMKPNRFSKVLVNLDAKTRSFSRIKSKTPEMCPKDGYLMIRNSEIIAGVVDKSVVGDGKKDSLFYVILRDYGALEAAEAITRLSKMCARFLGNRGFSIGIEDVQPGKSLSSQKEILVNKAYATSDDFIMQYAKGILECQPGMDQEATLEAKISSTLSKVRDDVGEICMDELGPANSPLIMATCGSKGSKINVSQMVACVGQQIISGKRVPDGFQDRSLPHFHKNSKHPLAKGFVSNSFYSGLTPTEFLFHAISGREGLVDTAVKTAETGYMSRRLMKSLEDLSSAYDGTVRSSNSDVVQFVYGDDGLDPTYMEGDGQAVEFKRTWIHSVNLNYDRHDSAMLPYEIIDYVNRALDDPKFLTNCNRDFIETIRTFVIENIAKYLASVRERRDLAPMLEEPDMDDLDDMEGDEFAPVAKRKSVENIIRVTEKQLRSFVDRCWEKYMRAKVEPGTAVGAIGAQSIGEPGTQMTLKTFHFAGVAAQTTLGVPRIKEIINAAKTISTPIITGQLINDRDERSARVVKGRIEKTYLKDVTSYIEEVYGPVTTYLSIQVNFDTISKLQLDITLADIAAAIWNTPKLKIPSQQVTVNNTLQQIHVHTSSDGKSSETEVYYRLQTYKRVLPDVVVAGIPTINRSVINQESGKIELFMEGTGLQAVMNTEGIVGTKTSTNHVMEMKDVLGIEAARYSIISEIGYTMAKHGLTVDPRHIMLLGDVMTCKGEVLGITRFGVAKMKDSVLALASFEKTTDHLFNAAARFAKDSIEGISECIVLGKLAPIGTNVFQLIRRTEEEEEQKPKELLFDTPSLHQLEITA.

Cys-66, Cys-69, Cys-76, His-79, Cys-106, Cys-109, and Cys-153 together coordinate Zn(2+). Residues Asp-493, Asp-495, and Asp-497 each contribute to the Mg(2+) site. The bridging helix stretch occupies residues 838–850 (PTEFLFHAISGRE).

Belongs to the RNA polymerase beta' chain family. In terms of assembly, component of the RNA polymerase III (Pol III) complex consisting of 17 subunits.

Its subcellular location is the nucleus. It catalyses the reaction RNA(n) + a ribonucleoside 5'-triphosphate = RNA(n+1) + diphosphate. In terms of biological role, DNA-dependent RNA polymerase catalyzes the transcription of DNA into RNA using the four ribonucleoside triphosphates as substrates. Largest and catalytic core component of RNA polymerase III which synthesizes small RNAs, such as 5S rRNA and tRNAs. Forms the polymerase active center together with the second largest subunit. A single-stranded DNA template strand of the promoter is positioned within the central active site cleft of Pol III. A bridging helix emanates from RPC1 and crosses the cleft near the catalytic site and is thought to promote translocation of Pol III by acting as a ratchet that moves the RNA-DNA hybrid through the active site by switching from straight to bent conformations at each step of nucleotide addition. This Schizosaccharomyces pombe (strain 972 / ATCC 24843) (Fission yeast) protein is DNA-directed RNA polymerase III subunit rpc1 (rpc1).